We begin with the raw amino-acid sequence, 187 residues long: MMSTSDAPLDPVEFIHSRIRTVPDWPQPGVMFRDITPLLQSAKALRVLVDLFVERYVDANLDYIAGLDARGFIIAPIVAYELSVGFVPIRKVGKLPYATQRESYALEYGTATVEIHEDACKPGDRVVIVDDLIATGGTMMAGKNLLERLGAVVVEGAAIVDLPDLGGSALLREAGLPLYTVTEFPGH.

This sequence belongs to the purine/pyrimidine phosphoribosyltransferase family. As to quaternary structure, homodimer.

It is found in the cytoplasm. It carries out the reaction AMP + diphosphate = 5-phospho-alpha-D-ribose 1-diphosphate + adenine. Its pathway is purine metabolism; AMP biosynthesis via salvage pathway; AMP from adenine: step 1/1. Its function is as follows. Catalyzes a salvage reaction resulting in the formation of AMP, that is energically less costly than de novo synthesis. This is Adenine phosphoribosyltransferase from Burkholderia pseudomallei (strain 668).